The following is a 264-amino-acid chain: Thymidylate synthase (264 aa).

DUMP is bound at residue Arg21. His51 contacts (6R)-5,10-methylene-5,6,7,8-tetrahydrofolate. Residue 126–127 coordinates dUMP; it reads RR. The active-site Nucleophile is Cys146. DUMP is bound by residues 166-169, Asn177, and 207-209; these read RSCD and HLY. (6R)-5,10-methylene-5,6,7,8-tetrahydrofolate is bound at residue Asp169. Ala263 is a binding site for (6R)-5,10-methylene-5,6,7,8-tetrahydrofolate.

The protein belongs to the thymidylate synthase family. Bacterial-type ThyA subfamily. As to quaternary structure, homodimer.

The protein localises to the cytoplasm. It catalyses the reaction dUMP + (6R)-5,10-methylene-5,6,7,8-tetrahydrofolate = 7,8-dihydrofolate + dTMP. The protein operates within pyrimidine metabolism; dTTP biosynthesis. Catalyzes the reductive methylation of 2'-deoxyuridine-5'-monophosphate (dUMP) to 2'-deoxythymidine-5'-monophosphate (dTMP) while utilizing 5,10-methylenetetrahydrofolate (mTHF) as the methyl donor and reductant in the reaction, yielding dihydrofolate (DHF) as a by-product. This enzymatic reaction provides an intracellular de novo source of dTMP, an essential precursor for DNA biosynthesis. The sequence is that of Thymidylate synthase from Salmonella typhimurium (strain LT2 / SGSC1412 / ATCC 700720).